A 338-amino-acid chain; its full sequence is Glycerol-3-phosphate dehydrogenase [NAD(P)+] (338 aa).

Residues Ser-14, Tyr-15, His-35, and Lys-109 each coordinate NADPH. The sn-glycerol 3-phosphate site is built by Lys-109, Gly-138, and Thr-140. Ala-142 contributes to the NADPH binding site. Residues Lys-194, Asp-247, Ser-257, Arg-258, and Asn-259 each contribute to the sn-glycerol 3-phosphate site. Lys-194 serves as the catalytic Proton acceptor. Position 258 (Arg-258) interacts with NADPH. NADPH is bound by residues Val-282 and Glu-284.

It belongs to the NAD-dependent glycerol-3-phosphate dehydrogenase family.

It localises to the cytoplasm. It carries out the reaction sn-glycerol 3-phosphate + NAD(+) = dihydroxyacetone phosphate + NADH + H(+). The enzyme catalyses sn-glycerol 3-phosphate + NADP(+) = dihydroxyacetone phosphate + NADPH + H(+). It functions in the pathway membrane lipid metabolism; glycerophospholipid metabolism. In terms of biological role, catalyzes the reduction of the glycolytic intermediate dihydroxyacetone phosphate (DHAP) to sn-glycerol 3-phosphate (G3P), the key precursor for phospholipid synthesis. This is Glycerol-3-phosphate dehydrogenase [NAD(P)+] from Shewanella sediminis (strain HAW-EB3).